A 257-amino-acid chain; its full sequence is 3-deoxy-manno-octulosonate cytidylyltransferase (257 aa).

It belongs to the KdsB family.

It is found in the cytoplasm. The catalysed reaction is 3-deoxy-alpha-D-manno-oct-2-ulosonate + CTP = CMP-3-deoxy-beta-D-manno-octulosonate + diphosphate. Its pathway is nucleotide-sugar biosynthesis; CMP-3-deoxy-D-manno-octulosonate biosynthesis; CMP-3-deoxy-D-manno-octulosonate from 3-deoxy-D-manno-octulosonate and CTP: step 1/1. It functions in the pathway bacterial outer membrane biogenesis; lipopolysaccharide biosynthesis. In terms of biological role, activates KDO (a required 8-carbon sugar) for incorporation into bacterial lipopolysaccharide in Gram-negative bacteria. In Xylella fastidiosa (strain M12), this protein is 3-deoxy-manno-octulosonate cytidylyltransferase.